The sequence spans 255 residues: 1-(5-phosphoribosyl)-5-[(5-phosphoribosylamino)methylideneamino] imidazole-4-carboxamide isomerase (255 aa).

Asp-12 functions as the Proton acceptor in the catalytic mechanism. Asp-131 functions as the Proton donor in the catalytic mechanism.

The protein belongs to the HisA/HisF family.

The protein resides in the cytoplasm. The catalysed reaction is 1-(5-phospho-beta-D-ribosyl)-5-[(5-phospho-beta-D-ribosylamino)methylideneamino]imidazole-4-carboxamide = 5-[(5-phospho-1-deoxy-D-ribulos-1-ylimino)methylamino]-1-(5-phospho-beta-D-ribosyl)imidazole-4-carboxamide. It participates in amino-acid biosynthesis; L-histidine biosynthesis; L-histidine from 5-phospho-alpha-D-ribose 1-diphosphate: step 4/9. This is 1-(5-phosphoribosyl)-5-[(5-phosphoribosylamino)methylideneamino] imidazole-4-carboxamide isomerase from Cutibacterium acnes (strain DSM 16379 / KPA171202) (Propionibacterium acnes).